We begin with the raw amino-acid sequence, 211 residues long: Thiamine-phosphate synthase (211 aa).

4-amino-2-methyl-5-(diphosphooxymethyl)pyrimidine contacts are provided by residues 37–41 and N69; that span reads QLRIK. The Mg(2+) site is built by D70 and D89. Residue S108 coordinates 4-amino-2-methyl-5-(diphosphooxymethyl)pyrimidine. 2-[(2R,5Z)-2-carboxy-4-methylthiazol-5(2H)-ylidene]ethyl phosphate is bound at residue 134–136; that stretch reads TQT. K137 lines the 4-amino-2-methyl-5-(diphosphooxymethyl)pyrimidine pocket. 2-[(2R,5Z)-2-carboxy-4-methylthiazol-5(2H)-ylidene]ethyl phosphate contacts are provided by residues G166 and 186–187; that span reads VS.

It belongs to the thiamine-phosphate synthase family. The cofactor is Mg(2+).

The catalysed reaction is 2-[(2R,5Z)-2-carboxy-4-methylthiazol-5(2H)-ylidene]ethyl phosphate + 4-amino-2-methyl-5-(diphosphooxymethyl)pyrimidine + 2 H(+) = thiamine phosphate + CO2 + diphosphate. It catalyses the reaction 2-(2-carboxy-4-methylthiazol-5-yl)ethyl phosphate + 4-amino-2-methyl-5-(diphosphooxymethyl)pyrimidine + 2 H(+) = thiamine phosphate + CO2 + diphosphate. The enzyme catalyses 4-methyl-5-(2-phosphooxyethyl)-thiazole + 4-amino-2-methyl-5-(diphosphooxymethyl)pyrimidine + H(+) = thiamine phosphate + diphosphate. It functions in the pathway cofactor biosynthesis; thiamine diphosphate biosynthesis; thiamine phosphate from 4-amino-2-methyl-5-diphosphomethylpyrimidine and 4-methyl-5-(2-phosphoethyl)-thiazole: step 1/1. Its function is as follows. Condenses 4-methyl-5-(beta-hydroxyethyl)thiazole monophosphate (THZ-P) and 2-methyl-4-amino-5-hydroxymethyl pyrimidine pyrophosphate (HMP-PP) to form thiamine monophosphate (TMP). The protein is Thiamine-phosphate synthase of Escherichia coli O6:H1 (strain CFT073 / ATCC 700928 / UPEC).